The chain runs to 31 residues: Cyclotide mech-4 (31 aa).

A cross-link (cyclopeptide (Gly-Asp)) is located at residues 1 to 31 (GSIPCGESCVYIPCISSLLGCSCKSKVCYKD). 3 disulfide bridges follow: cysteine 5–cysteine 21, cysteine 9–cysteine 23, and cysteine 14–cysteine 28.

Post-translationally, this is a cyclic peptide. In terms of processing, contains 3 disulfide bonds.

Functionally, probably participates in a plant defense mechanism (Potential). Binds to and induces leakage in phospholipd membranes, particularly ones containing 1-palmitoyl-2-oleophosphatidylethanolamine (POPE). In Melicytus chathamicus (Chatham Island mahoe), this protein is Cyclotide mech-4.